The chain runs to 454 residues: UPF0210 protein Memar_2269 (454 aa).

The protein belongs to the UPF0210 family.

The polypeptide is UPF0210 protein Memar_2269 (Methanoculleus marisnigri (strain ATCC 35101 / DSM 1498 / JR1)).